The chain runs to 166 residues: Large ribosomal subunit protein uL10 (166 aa).

It belongs to the universal ribosomal protein uL10 family. As to quaternary structure, part of the ribosomal stalk of the 50S ribosomal subunit. The N-terminus interacts with L11 and the large rRNA to form the base of the stalk. The C-terminus forms an elongated spine to which L12 dimers bind in a sequential fashion forming a multimeric L10(L12)X complex.

Forms part of the ribosomal stalk, playing a central role in the interaction of the ribosome with GTP-bound translation factors. The sequence is that of Large ribosomal subunit protein uL10 from Mesoplasma florum (strain ATCC 33453 / NBRC 100688 / NCTC 11704 / L1) (Acholeplasma florum).